The primary structure comprises 392 residues: Acetyl-CoA acetyltransferase (392 aa).

Cysteine 87 (acyl-thioester intermediate) is an active-site residue. Catalysis depends on proton acceptor residues histidine 348 and cysteine 378.

Belongs to the thiolase-like superfamily. Thiolase family.

The protein resides in the cytoplasm. The enzyme catalyses 2 acetyl-CoA = acetoacetyl-CoA + CoA. Its pathway is metabolic intermediate biosynthesis; (R)-mevalonate biosynthesis; (R)-mevalonate from acetyl-CoA: step 1/3. Its function is as follows. Involved in the production of polyhydroxyalkonic acids (PHAs), composed primarily of 3-hydroxybutyric acid (3HB) and 3-hydroxyvaleric acid (3HV). This chain is Acetyl-CoA acetyltransferase (phaA), found in Chromobacterium violaceum (strain ATCC 12472 / DSM 30191 / JCM 1249 / CCUG 213 / NBRC 12614 / NCIMB 9131 / NCTC 9757 / MK).